The following is a 468-amino-acid chain: Probable xyloglucan galactosyltransferase GT13 (468 aa).

Residues 1–18 lie on the Cytoplasmic side of the membrane; the sequence is MDKFNPKKEKTVKKRALK. The chain crosses the membrane as a helical; Signal-anchor for type II membrane protein span at residues 19–35; the sequence is VLTEISPTPLFSMLFLL. Residues 36–468 are Lumenal-facing; that stretch reads HISQIATYLS…RVSLFKMTRI (433 aa). 5 N-linked (GlcNAc...) asparagine glycosylation sites follow: Asn-53, Asn-116, Asn-153, Asn-240, and Asn-412.

The protein belongs to the glycosyltransferase 47 family. In terms of tissue distribution, expressed in roots, hypocotyls, cotyledons, leaves, stems, petals and carpels.

Its subcellular location is the golgi apparatus membrane. In terms of biological role, functions in xyloglucan synthesis by adding side chains to the xylosylated glucan backbone. Involved in the galactosylation of hemicellulose xyloglucan. The protein is Probable xyloglucan galactosyltransferase GT13 of Arabidopsis thaliana (Mouse-ear cress).